The following is a 191-amino-acid chain: Superoxide dismutase [Mn/Fe] (191 aa).

Fe(3+) contacts are provided by His-27, His-74, Asp-157, and His-161. Positions 27, 74, 157, and 161 each coordinate Mn(2+).

The protein belongs to the iron/manganese superoxide dismutase family. In terms of assembly, homodimer. The cofactor is Mn(2+). Fe(3+) is required as a cofactor.

It catalyses the reaction 2 superoxide + 2 H(+) = H2O2 + O2. With respect to regulation, inhibited by hydrogen peroxide. Its function is as follows. Destroys superoxide anion radicals which are normally produced within the cells and which are toxic to biological systems. Catalyzes the dismutation of superoxide anion radicals into O2 and H2O2 by successive reduction and oxidation of the transition metal ion at the active site. The chain is Superoxide dismutase [Mn/Fe] (sodB) from Porphyromonas gingivalis (strain ATCC BAA-308 / W83).